The sequence spans 292 residues: Light-independent protochlorophyllide reductase iron-sulfur ATP-binding protein (292 aa).

Residues 10 to 15 and lysine 39 contribute to the ATP site; that span reads GIGKST. Mg(2+) is bound at residue serine 14. Cysteine 95 is a [4Fe-4S] cluster binding site. An ATP-binding site is contributed by 182 to 183; sequence NR.

This sequence belongs to the NifH/BchL/ChlL family. Homodimer. Protochlorophyllide reductase is composed of three subunits; ChlL, ChlN and ChlB. [4Fe-4S] cluster serves as cofactor.

It localises to the plastid. It is found in the chloroplast. It carries out the reaction chlorophyllide a + oxidized 2[4Fe-4S]-[ferredoxin] + 2 ADP + 2 phosphate = protochlorophyllide a + reduced 2[4Fe-4S]-[ferredoxin] + 2 ATP + 2 H2O. The protein operates within porphyrin-containing compound metabolism; chlorophyll biosynthesis (light-independent). Functionally, component of the dark-operative protochlorophyllide reductase (DPOR) that uses Mg-ATP and reduced ferredoxin to reduce ring D of protochlorophyllide (Pchlide) to form chlorophyllide a (Chlide). This reaction is light-independent. The L component serves as a unique electron donor to the NB-component of the complex, and binds Mg-ATP. This Huperzia lucidula (Shining clubmoss) protein is Light-independent protochlorophyllide reductase iron-sulfur ATP-binding protein.